We begin with the raw amino-acid sequence, 72 residues long: Translation initiation factor IF-1 (72 aa).

The 72-residue stretch at 1-72 folds into the S1-like domain; that stretch reads MAKEETIQMQ…TRARITFRTK (72 aa).

This sequence belongs to the IF-1 family. As to quaternary structure, component of the 30S ribosomal translation pre-initiation complex which assembles on the 30S ribosome in the order IF-2 and IF-3, IF-1 and N-formylmethionyl-tRNA(fMet); mRNA recruitment can occur at any time during PIC assembly.

It localises to the cytoplasm. In terms of biological role, one of the essential components for the initiation of protein synthesis. Stabilizes the binding of IF-2 and IF-3 on the 30S subunit to which N-formylmethionyl-tRNA(fMet) subsequently binds. Helps modulate mRNA selection, yielding the 30S pre-initiation complex (PIC). Upon addition of the 50S ribosomal subunit IF-1, IF-2 and IF-3 are released leaving the mature 70S translation initiation complex. The chain is Translation initiation factor IF-1 from Nitrosomonas eutropha (strain DSM 101675 / C91 / Nm57).